A 162-amino-acid chain; its full sequence is Regulatory protein RecX (162 aa).

Belongs to the RecX family.

Its subcellular location is the cytoplasm. In terms of biological role, modulates RecA activity. The protein is Regulatory protein RecX of Xanthomonas axonopodis pv. citri (strain 306).